A 605-amino-acid polypeptide reads, in one-letter code: Phosphoenolpyruvate carboxykinase [GTP] (605 aa).

Residues Arg-79 and 218 to 220 each bind substrate; that span reads YGG. Residues Lys-227 and His-247 each contribute to the Mn(2+) site. Position 269 (Ser-269) interacts with substrate. 270–275 provides a ligand contact to GTP; sequence ACGKTN. The active site involves Cys-271. Asp-294 provides a ligand contact to Mn(2+). Residues 364-381 show a composition bias toward basic and acidic residues; sequence LTDWKGRDWTPQSDEKAA. The interval 364 to 385 is disordered; the sequence is LTDWKGRDWTPQSDEKAAHPNS. Substrate is bound at residue 384 to 386; it reads NSR. Residues Arg-386, Arg-417, and 513–516 each bind GTP; that span reads FGEN.

Belongs to the phosphoenolpyruvate carboxykinase [GTP] family. As to quaternary structure, monomer. Requires Mn(2+) as cofactor.

The protein resides in the cytoplasm. The catalysed reaction is oxaloacetate + GTP = phosphoenolpyruvate + GDP + CO2. Its pathway is carbohydrate biosynthesis; gluconeogenesis. Functionally, catalyzes the conversion of oxaloacetate (OAA) to phosphoenolpyruvate (PEP), the rate-limiting step in the metabolic pathway that produces glucose from lactate and other precursors derived from the citric acid cycle. This is Phosphoenolpyruvate carboxykinase [GTP] from Saccharopolyspora erythraea (strain ATCC 11635 / DSM 40517 / JCM 4748 / NBRC 13426 / NCIMB 8594 / NRRL 2338).